The chain runs to 580 residues: Protein O-linked-mannose beta-1,4-N-acetylglucosaminyltransferase 2 (580 aa).

Residues 1 to 4 (MHLS) are Cytoplasmic-facing. The chain crosses the membrane as a helical; Signal-anchor for type II membrane protein span at residues 5–25 (AVFNALLVSVLAAVLWKHVRL). Residues 26-580 (REHAATLEEE…PFADVLVCNT (555 aa)) are Lumenal-facing. N-linked (GlcNAc...) asparagine glycans are attached at residues asparagine 99 and asparagine 276. Residues 488–580 (ARCQASVHGA…PFADVLVCNT (93 aa)) form the Fibronectin type-III domain.

Belongs to the glycosyltransferase 61 family.

It is found in the endoplasmic reticulum membrane. The catalysed reaction is 3-O-(alpha-D-mannosyl)-L-threonyl-[protein] + UDP-N-acetyl-alpha-D-glucosamine = 3-O-(N-acetyl-beta-D-glucosaminyl-(1-&gt;4)-alpha-D-mannosyl)-L-threonyl-[protein] + UDP + H(+). Its pathway is protein modification; protein glycosylation. O-linked mannose beta-1,4-N-acetylglucosaminyltransferase that transfers UDP-N-acetyl-D-glucosamine to the 4-position of the mannose to generate N-acetyl-D-glucosamine-beta-1,4-O-D-mannosylprotein. Involved in the biosynthesis of the phosphorylated O-mannosyl trisaccharide (N-acetylgalactosamine-beta-3-N-acetylglucosamine-beta-4-(phosphate-6-)mannose), a carbohydrate structure present in alpha-dystroglycan (DAG1), which is required for binding laminin G-like domain-containing extracellular proteins with high affinity. This is Protein O-linked-mannose beta-1,4-N-acetylglucosaminyltransferase 2 (POMGNT2) from Pan troglodytes (Chimpanzee).